The sequence spans 310 residues: 4-hydroxyproline 2-epimerase (310 aa).

Cysteine 88 serves as the catalytic Proton acceptor. Residues 89 to 90, histidine 208, and aspartate 232 contribute to the substrate site; that span reads GH. Residue cysteine 236 is the Proton donor of the active site. Residue 237-238 coordinates substrate; it reads GT.

This sequence belongs to the proline racemase family.

It carries out the reaction trans-4-hydroxy-L-proline = cis-4-hydroxy-D-proline. Its function is as follows. Catalyzes the epimerization of trans-4-hydroxy-L-proline (t4LHyp) to cis-4-hydroxy-D-proline (c4DHyp). Is likely involved in a degradation pathway that converts t4LHyp to alpha-ketoglutarate. Displays no proline racemase activity. The protein is 4-hydroxyproline 2-epimerase of Acinetobacter baumannii (strain ATCC 17978 / DSM 105126 / CIP 53.77 / LMG 1025 / NCDC KC755 / 5377).